A 220-amino-acid chain; its full sequence is Inner membrane protein YqjA (220 aa).

At 1-27 (MELLTQLLQALWAQDFETLANPSMIGM) the chain is on the periplasmic side. Residues 28-48 (LYFVLFVILFLENGLLPAAFL) traverse the membrane as a helical segment. Topologically, residues 49 to 52 (PGDS) are cytoplasmic. A run of 2 helical transmembrane segments spans residues 53 to 73 (LLVL…QTIL) and 74 to 94 (LLTV…RWLG). The Cytoplasmic segment spans residues 95–154 (NTRTVQNWLSHLPAHYHQRAHHLFHKHGLSALLIGRFIAFVRTLLPTIAGLSGLNNARFQ). The chain crosses the membrane as a helical span at residues 155–175 (FFNWMSGLLWVLILTTLGYML). Residues 176-191 (GKTPVFLKYEDQLMSC) lie on the Periplasmic side of the membrane. Residues 192-212 (LMLLPVVLLVFGLAGSLVVLW) form a helical membrane-spanning segment. At 213–220 (KKKYGNRG) the chain is on the cytoplasmic side.

This sequence belongs to the DedA family.

The protein localises to the cell inner membrane. In terms of biological role, may be a membrane transporter required for proton motive force (PMF)-dependent drug efflux. Required, with YghB, for the proper export of certain periplasmic amidases and, possibly, other Tat substrates. May play a role in determining membrane lipid composition. This is Inner membrane protein YqjA (yqjA) from Escherichia coli (strain K12).